A 358-amino-acid chain; its full sequence is DNA polymerase IV (358 aa).

The region spanning 4 to 185 (IIHIDMDCYF…LSLRKIPGVG (182 aa)) is the UmuC domain. The Mg(2+) site is built by D8 and D103. E104 is a catalytic residue.

The protein belongs to the DNA polymerase type-Y family. In terms of assembly, monomer. It depends on Mg(2+) as a cofactor.

It localises to the cytoplasm. The enzyme catalyses DNA(n) + a 2'-deoxyribonucleoside 5'-triphosphate = DNA(n+1) + diphosphate. Its function is as follows. Poorly processive, error-prone DNA polymerase involved in untargeted mutagenesis. Copies undamaged DNA at stalled replication forks, which arise in vivo from mismatched or misaligned primer ends. These misaligned primers can be extended by PolIV. Exhibits no 3'-5' exonuclease (proofreading) activity. May be involved in translesional synthesis, in conjunction with the beta clamp from PolIII. The chain is DNA polymerase IV from Shewanella baltica (strain OS185).